The sequence spans 246 residues: Small ribosomal subunit protein uS2 (246 aa).

Belongs to the universal ribosomal protein uS2 family.

The sequence is that of Small ribosomal subunit protein uS2 from Burkholderia cenocepacia (strain HI2424).